Reading from the N-terminus, the 785-residue chain is B-cell scaffold protein with ankyrin repeats (785 aa).

The interval 1–154 (MLPAAPGKGL…DYISVIQSII (154 aa)) is interaction with ITPR2. Residues 25-153 (NTKDIIMIYE…EDYISVIQSI (129 aa)) enclose the TIR domain. The DBB domain maps to 200 to 327 (VLPTEIPCEN…EIPYYEFQSL (128 aa)). ANK repeat units follow at residues 342 to 371 (ELPT…ATWA) and 378 to 408 (EGSD…EIDI). Disordered regions lie at residues 433–480 (PAFH…SESS), 493–514 (GADP…LPPP), 538–578 (QMER…EDPY), and 606–625 (FIIN…PPKE). Residues 553–568 (ETGDEPKGEKEKKEEE) are compositionally biased toward basic and acidic residues. The segment covering 569–578 (KEQEEEEDPY) has biased composition (acidic residues). Residues 611–621 (PPAPTPRPTSI) are compositionally biased toward pro residues.

Interacts with LYN, ITPR1 and ITPR2. Post-translationally, phosphorylated on tyrosines upon BCR activation. Expressed in B-cell but not T-cell or myeloid cell lines. Highest expression in CD19(+) B-cells, with very low expression in other cell populations.

In terms of biological role, involved in B-cell receptor (BCR)-induced Ca(2+) mobilization from intracellular stores. Promotes Lyn-mediated phosphorylation of IP3 receptors 1 and 2. This chain is B-cell scaffold protein with ankyrin repeats (BANK1), found in Homo sapiens (Human).